Here is a 661-residue protein sequence, read N- to C-terminus: Transcription factor ccg-8 (661 aa).

Basic residues predominate over residues 1–11 (MEHHHHHRHMH). Disordered stretches follow at residues 1 to 69 (MEHH…QADN), 107 to 243 (SASS…LDDP), 255 to 279 (LKTDSVSSPPNRNAPLRRGMTDQNQ), and 354 to 398 (RTKS…RRTS). Low complexity-rich tracts occupy residues 23 to 43 (HQQYQQPPQHHQHYEAPQHQQ) and 107 to 140 (SASSLSSLPPLVLHPPSNGLQPNKPRSRSPSSNR). The span at 173–187 (DHSLPSIASLNVGSS) shows a compositional bias: polar residues. A compositionally biased stretch (pro residues) spans 192–203 (QPTPTPQPPPKF). The span at 357–366 (SSSDTRESGQ) shows a compositional bias: basic and acidic residues.

Functionally, transcription factor that plays a pivotal role in azole adaptive responses by regulating the drug accumulation in the cells. Affects the transcriptional responses to ketoconazole of many genes, including the target gene (erg11), an azole transporter gene (cdr4), a hexose transporter gene (hxt13), a stress response gene (kts-1), two transcription factor genes (named kts-2 and fsd-1/ndt80). Also regulates phospholipid synthesis that is not involved in azole resistance. The sequence is that of Transcription factor ccg-8 from Neurospora crassa (strain ATCC 24698 / 74-OR23-1A / CBS 708.71 / DSM 1257 / FGSC 987).